The chain runs to 298 residues: Esterase Rv0045c (298 aa).

Residue S122 is the Nucleophile of the active site. Residues D146 and H277 contribute to the active site.

It belongs to the AB hydrolase superfamily. As to quaternary structure, monomer.

The catalysed reaction is a carboxylic ester + H2O = an alcohol + a carboxylate + H(+). The enzyme catalyses a butanoate ester + H2O = an aliphatic alcohol + butanoate + H(+). It catalyses the reaction an acetyl ester + H2O = an aliphatic alcohol + acetate + H(+). It carries out the reaction a hexanoate ester + H2O = an aliphatic alcohol + hexanoate + H(+). The catalysed reaction is a tetradecanoate ester + H2O = an aliphatic alcohol + tetradecanoate + H(+). With respect to regulation, hydrolysis of a fluorogenic ester substrate (MOAME) is allosterically inhibited by divalent transition metal cations (Cu(2+), Zn(2+), Ni(2+) and Co(2+)). Inhibition is largely due to a two order of magnitude drop in kcat, with relatively little change in KM. The thermal stability decreases with increasing concentrations of Ni(2+). Esterase likely involved in ester/lipid metabolism. Shows strong substrate selectivity toward short, straight chain alkyl esters with the highest activity toward four atom chains. The physiological substrate is unknown. Is able to hydrolyze ester bonds within a wide range of p-nitrophenyl derivatives (C2-C14) in vitro. The protein is Esterase Rv0045c of Mycobacterium tuberculosis (strain ATCC 25618 / H37Rv).